The sequence spans 144 residues: Large ribosomal subunit protein uL16 (144 aa).

This sequence belongs to the universal ribosomal protein uL16 family. As to quaternary structure, part of the 50S ribosomal subunit.

In terms of biological role, binds 23S rRNA and is also seen to make contacts with the A and possibly P site tRNAs. The protein is Large ribosomal subunit protein uL16 of Pediococcus pentosaceus (strain ATCC 25745 / CCUG 21536 / LMG 10740 / 183-1w).